The sequence spans 583 residues: L-galactono-1,4-lactone dehydrogenase 1, mitochondrial (583 aa).

A mitochondrion-targeting transit peptide spans 1–36; sequence MRRLLLAGILRRASSSPSSHHHLHLVRALSASSPLP. Positions 37 to 78 are cleaved as a propeptide — removed in mature form; it reads ASDADLRKYAGYALLLLGCGAATYYSFPLPPDALHKKAVPFK. Residues 45–61 traverse the membrane as a helical segment; the sequence is YAGYALLLLGCGAATYY. Residues 95-266 enclose the FAD-binding PCMH-type domain; the sequence is THEVHTRVLL…AEVTLQCVER (172 aa).

Requires FAD as cofactor.

Its subcellular location is the mitochondrion membrane. It catalyses the reaction L-galactono-1,4-lactone + 4 Fe(III)-[cytochrome c] = L-dehydroascorbate + 4 Fe(II)-[cytochrome c] + 5 H(+). Its pathway is cofactor biosynthesis; L-ascorbate biosynthesis. In terms of biological role, involved in the biosynthesis of ascorbic acid. The chain is L-galactono-1,4-lactone dehydrogenase 1, mitochondrial (GLDH1) from Oryza sativa subsp. japonica (Rice).